The following is a 359-amino-acid chain: MRITAQPGIMDIALYQGGASQIDGQAEPLKLSSNENPSGCSPAASAKVAETALDLHRYPSTDHSALRMAIGQVHGLDAGRIICGVGSDELLTLLAMAFAGPGDEVLYTEHGFSMYRIFALSAGATPVVAPEKDRTVDIDAIIDRLTPATRLVYIANPANPTGTAIGLEALRRLAQSVPPTSLLVLDGAYAEFFEGYDGGASLVDEFDNVVMTRTFSKLYGLGGLRVGWAYATQEVIDVLNRVRGPFNLSSVALAGAEAAVNDRAFVETCLQENAAQRVRLMGGLNQLGIACDPSHANFVLARFADEAEALAADAHLKSEGILVRIVKGYGFPEALRITVGRADDVTRVLDALARFKGVS.

Residue K217 is modified to N6-(pyridoxal phosphate)lysine.

This sequence belongs to the class-II pyridoxal-phosphate-dependent aminotransferase family. Histidinol-phosphate aminotransferase subfamily. As to quaternary structure, homodimer. Pyridoxal 5'-phosphate serves as cofactor.

It catalyses the reaction L-histidinol phosphate + 2-oxoglutarate = 3-(imidazol-4-yl)-2-oxopropyl phosphate + L-glutamate. It functions in the pathway amino-acid biosynthesis; L-histidine biosynthesis; L-histidine from 5-phospho-alpha-D-ribose 1-diphosphate: step 7/9. In Roseobacter denitrificans (strain ATCC 33942 / OCh 114) (Erythrobacter sp. (strain OCh 114)), this protein is Histidinol-phosphate aminotransferase.